The primary structure comprises 313 residues: Intelectin-like protein (313 aa).

Residues 33–251 (TSCCSQTSPG…NNEKAPMALC (219 aa)) enclose the Fibrinogen C-terminal domain. 7 residues coordinate Ca(2+): histidine 86, glutamate 87, asparagine 89, glycine 92, glycine 97, aspartate 98, and aspartate 133. 3 disulfide bridges follow: cysteine 94-cysteine 280, cysteine 199-cysteine 259, and cysteine 251-cysteine 265. Asparagine 260, glutamate 262, glutamate 274, and aspartate 282 together coordinate Ca(2+). Residues 262–263 (EH) and glutamate 274 contribute to the a carbohydrate site.

As to quaternary structure, monomer, homodimer, homotrimer and homotetramer. Mostly monomeric or dimeric.

The protein localises to the secreted. Functionally, binds mannan, mannose and, to a lesser degree, D-lactose, N-acetylgalactosamine, N-acetylglucosamine and beta-D-glucose. The protein is Intelectin-like protein of Alligator mississippiensis (American alligator).